Reading from the N-terminus, the 378-residue chain is 4-hydroxy-3-methylbut-2-en-1-yl diphosphate synthase (flavodoxin) (378 aa).

[4Fe-4S] cluster contacts are provided by Cys268, Cys271, Cys303, and Glu310.

Belongs to the IspG family. [4Fe-4S] cluster serves as cofactor.

The catalysed reaction is (2E)-4-hydroxy-3-methylbut-2-enyl diphosphate + oxidized [flavodoxin] + H2O + 2 H(+) = 2-C-methyl-D-erythritol 2,4-cyclic diphosphate + reduced [flavodoxin]. It functions in the pathway isoprenoid biosynthesis; isopentenyl diphosphate biosynthesis via DXP pathway; isopentenyl diphosphate from 1-deoxy-D-xylulose 5-phosphate: step 5/6. Its function is as follows. Converts 2C-methyl-D-erythritol 2,4-cyclodiphosphate (ME-2,4cPP) into 1-hydroxy-2-methyl-2-(E)-butenyl 4-diphosphate. The chain is 4-hydroxy-3-methylbut-2-en-1-yl diphosphate synthase (flavodoxin) from Corynebacterium glutamicum (strain ATCC 13032 / DSM 20300 / JCM 1318 / BCRC 11384 / CCUG 27702 / LMG 3730 / NBRC 12168 / NCIMB 10025 / NRRL B-2784 / 534).